We begin with the raw amino-acid sequence, 116 residues long: MSKTNPRLSSLIADLKSAARSSGGAVWGDVAERLEKPRRTHAEVNLGRIERYAQEDETVVVPGKVLGSGVLQKDVTVAAVDFSGTAETKIDQVGEAVSLEQAIENNPEGSHVRVIR.

This sequence belongs to the eukaryotic ribosomal protein eL18 family. As to quaternary structure, part of the 50S ribosomal subunit. Interacts weakly with proteins L4 and L15. Has been cross-linked to L4.

Functionally, stabilizes the tertiary rRNA structure within the 23S rRNA domain (domain II) to which it binds. The sequence is that of Large ribosomal subunit protein eL18 (rpl18e) from Haloarcula marismortui (strain ATCC 43049 / DSM 3752 / JCM 8966 / VKM B-1809) (Halobacterium marismortui).